Here is a 448-residue protein sequence, read N- to C-terminus: Exodeoxyribonuclease 7 large subunit (448 aa).

It belongs to the XseA family. In terms of assembly, heterooligomer composed of large and small subunits.

The protein localises to the cytoplasm. It catalyses the reaction Exonucleolytic cleavage in either 5'- to 3'- or 3'- to 5'-direction to yield nucleoside 5'-phosphates.. Its function is as follows. Bidirectionally degrades single-stranded DNA into large acid-insoluble oligonucleotides, which are then degraded further into small acid-soluble oligonucleotides. This Bacillus pumilus (strain SAFR-032) protein is Exodeoxyribonuclease 7 large subunit.